We begin with the raw amino-acid sequence, 462 residues long: A-type ATP synthase subunit B (462 aa).

Belongs to the ATPase alpha/beta chains family. As to quaternary structure, has multiple subunits with at least A(3), B(3), C, D, E, F, H, I and proteolipid K(x).

The protein localises to the cell membrane. In terms of biological role, component of the A-type ATP synthase that produces ATP from ADP in the presence of a proton gradient across the membrane. The B chain is a regulatory subunit. The protein is A-type ATP synthase subunit B of Methanococcus maripaludis (strain C5 / ATCC BAA-1333).